A 243-amino-acid chain; its full sequence is Large ribosomal subunit protein uL2 (243 aa).

Residues 202–243 are disordered; that stretch reads HGGGRHQHVGQSSTVSRNAPPGAKVGSIAARKTGRAKIKDRR. The segment covering 233-243 has biased composition (basic residues); sequence KTGRAKIKDRR.

It belongs to the universal ribosomal protein uL2 family. Part of the 50S ribosomal subunit. Forms a bridge to the 30S subunit in the 70S ribosome.

Functionally, one of the primary rRNA binding proteins. Required for association of the 30S and 50S subunits to form the 70S ribosome, for tRNA binding and peptide bond formation. It has been suggested to have peptidyltransferase activity; this is somewhat controversial. Makes several contacts with the 16S rRNA in the 70S ribosome. This chain is Large ribosomal subunit protein uL2, found in Cenarchaeum symbiosum (strain A).